Reading from the N-terminus, the 236-residue chain is (5-formylfuran-3-yl)methyl phosphate synthase (236 aa).

Lys-27 (schiff-base intermediate with substrate) is an active-site residue. Lys-85 serves as the catalytic Proton acceptor.

It belongs to the MfnB family.

It carries out the reaction 2 D-glyceraldehyde 3-phosphate = 4-(hydroxymethyl)-2-furancarboxaldehyde phosphate + phosphate + 2 H2O. It functions in the pathway cofactor biosynthesis; methanofuran biosynthesis. Catalyzes the formation of 4-(hydroxymethyl)-2-furancarboxaldehyde phosphate (4-HFC-P) from two molecules of glyceraldehyde-3-P (GA-3-P). The protein is (5-formylfuran-3-yl)methyl phosphate synthase of Methanothermobacter thermautotrophicus (strain ATCC 29096 / DSM 1053 / JCM 10044 / NBRC 100330 / Delta H) (Methanobacterium thermoautotrophicum).